The following is a 563-amino-acid chain: Germacrene-A synthase (563 aa).

The Mg(2+) site is built by Asp316, Asp320, Asp460, Thr464, and Glu468. The DDXXD motif signature appears at 316 to 320; that stretch reads DDTYD.

The protein belongs to the terpene synthase family. Tpsa subfamily. The cofactor is Mg(2+). Mn(2+) is required as a cofactor. As to expression, high expression in disk florets, moderate expression in ray florets and detected in leaves and stems, but not in roots.

The enzyme catalyses (2E,6E)-farnesyl diphosphate = (+)-(R)-germacrene A + diphosphate. It participates in secondary metabolite biosynthesis; terpenoid biosynthesis. In terms of biological role, sesquiterpene synthase involved in germacrene A biosynthesis. May be involved in the biosynthesis of the sesquiterpene lactone matricine, one of the major active compounds of chamomile flowers. This is Germacrene-A synthase from Matricaria chamomilla var. recutita (German chamomile).